The chain runs to 68 residues: Cytotoxic linear peptide (68 aa).

The first 23 residues, 1 to 23, serve as a signal peptide directing secretion; sequence MKTQFAILLIALVLFQMFSQSEA. Position 36 is a leucine amide (Leu36). Residues 40–68 constitute a propeptide that is removed on maturation; that stretch reads GLNELDDLDELFDGEISQADIDFLKELMS.

This sequence belongs to the non-disulfide-bridged peptide (NDBP) superfamily. Short antimicrobial peptide (group 4) family. In terms of tissue distribution, expressed by the venom gland.

The protein localises to the secreted. Its subcellular location is the target cell membrane. Amphipathic peptide that has antibacterial activities. This is Cytotoxic linear peptide from Pandinus cavimanus (Tanzanian red clawed scorpion).